We begin with the raw amino-acid sequence, 180 residues long: DNA-directed RNA polymerase subunit omega (180 aa).

The interval 100–180 is disordered; sequence ISKSGTPILP…NSDDSETTNS (81 aa). Composition is skewed to acidic residues over residues 137–151 and 159–180; these read EVDV…DEET and AEAE…TTNS.

It belongs to the RNA polymerase subunit omega family. In terms of assembly, the RNAP catalytic core consists of 2 alpha, 1 beta, 1 beta' and 1 omega subunit. When a sigma factor is associated with the core the holoenzyme is formed, which can initiate transcription.

The catalysed reaction is RNA(n) + a ribonucleoside 5'-triphosphate = RNA(n+1) + diphosphate. In terms of biological role, promotes RNA polymerase assembly. Latches the N- and C-terminal regions of the beta' subunit thereby facilitating its interaction with the beta and alpha subunits. In Pelagibacter ubique (strain HTCC1062), this protein is DNA-directed RNA polymerase subunit omega.